The following is a 713-amino-acid chain: Ribosomal RNA large subunit methyltransferase K/L (713 aa).

Positions Leu-43–Phe-154 constitute a THUMP domain.

The protein belongs to the methyltransferase superfamily. RlmKL family.

The protein resides in the cytoplasm. It catalyses the reaction guanosine(2445) in 23S rRNA + S-adenosyl-L-methionine = N(2)-methylguanosine(2445) in 23S rRNA + S-adenosyl-L-homocysteine + H(+). The catalysed reaction is guanosine(2069) in 23S rRNA + S-adenosyl-L-methionine = N(2)-methylguanosine(2069) in 23S rRNA + S-adenosyl-L-homocysteine + H(+). Its function is as follows. Specifically methylates the guanine in position 2445 (m2G2445) and the guanine in position 2069 (m7G2069) of 23S rRNA. The sequence is that of Ribosomal RNA large subunit methyltransferase K/L from Shewanella sp. (strain MR-4).